The chain runs to 322 residues: Ribosomal lysine N-methyltransferase 5 (322 aa).

Residues Trp-92, 141 to 143 (GTG), Asp-163, Trp-214, and Met-242 each bind S-adenosyl-L-methionine.

This sequence belongs to the class I-like SAM-binding methyltransferase superfamily. RKM5 family.

S-adenosyl-L-methionine-dependent protein-lysine N-methyltransferase that methylates 60S ribosomal protein L1. The sequence is that of Ribosomal lysine N-methyltransferase 5 (RKM5) from Kluyveromyces lactis (strain ATCC 8585 / CBS 2359 / DSM 70799 / NBRC 1267 / NRRL Y-1140 / WM37) (Yeast).